We begin with the raw amino-acid sequence, 504 residues long: D-alanine--D-alanyl carrier protein ligase (504 aa).

Position 152-153 (152-153 (TS)) interacts with ATP. A D-alanine-binding site is contributed by aspartate 197. 292–297 (NTYGPT) serves as a coordination point for ATP. Valine 301 is a binding site for D-alanine. ATP is bound by residues aspartate 383, 394–397 (YNGR), and lysine 492. D-alanine is bound at residue lysine 492.

Belongs to the ATP-dependent AMP-binding enzyme family. DltA subfamily.

It is found in the cytoplasm. The catalysed reaction is holo-[D-alanyl-carrier protein] + D-alanine + ATP = D-alanyl-[D-alanyl-carrier protein] + AMP + diphosphate. Its pathway is cell wall biogenesis; lipoteichoic acid biosynthesis. Functionally, catalyzes the first step in the D-alanylation of lipoteichoic acid (LTA), the activation of D-alanine and its transfer onto the D-alanyl carrier protein (Dcp) DltC. In an ATP-dependent two-step reaction, forms a high energy D-alanyl-AMP intermediate, followed by transfer of the D-alanyl residue as a thiol ester to the phosphopantheinyl prosthetic group of the Dcp. D-alanylation of LTA plays an important role in modulating the properties of the cell wall in Gram-positive bacteria, influencing the net charge of the cell wall. The sequence is that of D-alanine--D-alanyl carrier protein ligase from Bacillus cereus (strain ATCC 10987 / NRS 248).